The primary structure comprises 700 residues: Methionine synthase reductase (700 aa).

One can recognise a Flavodoxin-like domain in the interval 4–147 (FLLLYATQRG…VVEPWIDGLW (144 aa)). FMN contacts are provided by residues 10–14 (TQRGQ) and 93–124 (LLGLGDSEYTYFCNGGKVIDKRLQELGAQHFY). Positions 168 to 247 (TLAQASDAPL…SSLSIPAVSP (80 aa)) are hinge. 2 positions are modified to phosphoserine: serine 173 and serine 190. An FAD-binding FR-type domain is found at 272–534 (DPIFQVPISK…PRATNSFHLP (263 aa)). Lysine 292 provides a ligand contact to NADP(+). FAD-binding positions include 452 to 455 (RPYS) and 488 to 491 (GVCT). NADP(+)-binding positions include 611–612 (SR), 626–628 (YVQ), and aspartate 661. Tryptophan 699 lines the FAD pocket.

In terms of assembly, forms a multiprotein complex with MMACHC, MMADHC and MTR. The cofactor is FAD. FMN serves as cofactor.

The protein localises to the cytoplasm. It carries out the reaction 2 methylcob(III)alamin-[methionine synthase] + 2 S-adenosyl-L-homocysteine + NADP(+) + H(+) = 2 cob(II)alamin-[methionine synthase] + 2 S-adenosyl-L-methionine + NADPH. The enzyme catalyses 2 cob(II)alamin + A + 2 H2O + 2 H(+) = 2 aquacob(III)alamin + AH2. Key enzyme in methionine and folate homeostasis responsible for the reactivation of methionine synthase (MTR/MS) activity by catalyzing the reductive methylation of MTR-bound cob(II)alamin. Cobalamin (vitamin B12) forms a complex with MTR to serve as an intermediary in methyl transfer reactions that cycles between MTR-bound methylcob(III)alamin and MTR bound-cob(I)alamin forms, and occasional oxidative escape of the cob(I)alamin intermediate during the catalytic cycle leads to the inactive cob(II)alamin species. The processing of cobalamin in the cytosol occurs in a multiprotein complex composed of at least MMACHC, MMADHC, MTRR and MTR which may contribute to shuttle safely and efficiently cobalamin towards MTR in order to produce methionine. Also necessary for the utilization of methyl groups from the folate cycle, thereby affecting transgenerational epigenetic inheritance. Also acts as a molecular chaperone for methionine synthase by stabilizing apoMTR and incorporating methylcob(III)alamin into apoMTR to form the holoenzyme. Also serves as an aquacob(III)alamin reductase by reducing aquacob(III)alamin to cob(II)alamin; this reduction leads to stimulation of the conversion of apoMTR and aquacob(III)alamin to MTR holoenzyme. The chain is Methionine synthase reductase (Mtrr) from Rattus norvegicus (Rat).